Here is a 310-residue protein sequence, read N- to C-terminus: UPF0761 membrane protein VFMJ11_0098 (310 aa).

Transmembrane regions (helical) follow at residues 34 to 54 (YMAY…LSVL), 97 to 117 (MTAV…SSID), 136 to 156 (FSLY…SLAA), 178 to 198 (LLGW…YLLV), 207 to 227 (HALI…VGFA), and 242 to 262 (ALAA…IVLI).

The protein belongs to the UPF0761 family.

It localises to the cell inner membrane. This Aliivibrio fischeri (strain MJ11) (Vibrio fischeri) protein is UPF0761 membrane protein VFMJ11_0098.